The chain runs to 53 residues: UPF0391 membrane protein BURPS1106A_A2993 (53 aa).

Transmembrane regions (helical) follow at residues 5–25 and 30–50; these read ALIF…GIAA and IAKI…VLGV.

This sequence belongs to the UPF0391 family.

The protein resides in the cell membrane. The polypeptide is UPF0391 membrane protein BURPS1106A_A2993 (Burkholderia pseudomallei (strain 1106a)).